A 658-amino-acid chain; its full sequence is MSGVTARMENSIITTDSGILFFDQNWTQVSSGGHQFQHISAFAYDEVKQKLYFSDLKDPKFRIFSLDANPQEEYHKVTKLLPKSDETAYITGLVFDHLERKLYWTERGTHALYSVEVDKIGNGTDAGSLISTVTKVEDNHDLAGLAIDECRRHLYWTNSYLQTSNVVRATMAGKVLNSHTEDVYEPKGIAVDHYSNRIYWVEKKFGRAFSIQSVNLEVEDVKTFISENDKAPTHVALNSRYLYWVDQQVGEVHETLKSDSTQSRVVYRGNRPTAIIIKSALLLNHQNNNPSCKSVIAKILDNVKRESEGELPQADKPTSAKPEMIICLNNGILNHNTNSCICLPEYQGNFCEIPICNNYCVHGKCVIGRDNRPTCECDAKFEGERCDRSKCDGFCLNSGNCSFSDATATCACPKNFSGKRCETAICTSDYCYNGRCMVEEGGSPKCQCNVGYRGERCEEYTCNNYCLNDGKCVLNNETMLVECRCGAEYTGKRCEIPKRFCSLDTGNPELQPYCDGIPLSSQQQQQQLVEPQISYCKNSFNRTVVYASLAFAASLFILMVILLIVRRFYEEGRPRITKRFKVTSNHTQMTSRPATQCEITIENCCNMNVCETPCFDTNLLQKSSSKAEDKQYLLDDIENIAGSYRKLPSCAGGDKNLP.

The Extracellular portion of the chain corresponds to 1-543 (MSGVTARMEN…SYCKNSFNRT (543 aa)). N-linked (GlcNAc...) asparagine glycans are attached at residues N25 and N122. LDL-receptor class B repeat units follow at residues 100–142 (RKLY…NHDL), 152–195 (RHLY…DHYS), and 196–241 (NRIY…NSRY). 3 EGF-like domains span residues 352 to 384 (EIPI…FEGE), 387 to 422 (DRSK…KRCE), and 458 to 495 (EEYT…KRCE). 8 disulfides stabilise this stretch: C356/C365, C360/C375, C391/C401, C395/C410, C412/C421, C462/C472, C466/C483, and C485/C494. N-linked (GlcNAc...) asparagine glycans are attached at residues N400 and N415. An N-linked (GlcNAc...) asparagine glycan is attached at N476. The N-linked (GlcNAc...) asparagine glycan is linked to N541. A helical transmembrane segment spans residues 544-564 (VVYASLAFAASLFILMVILLI). Residues 565-658 (VRRFYEEGRP…SCAGGDKNLP (94 aa)) lie on the Cytoplasmic side of the membrane.

Belongs to the cueball family.

It localises to the cell membrane. Functionally, has a role in spermatogenesis and oogenesis. In Culex quinquefasciatus (Southern house mosquito), this protein is Protein cueball.